A 117-amino-acid chain; its full sequence is Large ribosomal subunit protein bL19 (117 aa).

This sequence belongs to the bacterial ribosomal protein bL19 family.

This protein is located at the 30S-50S ribosomal subunit interface and may play a role in the structure and function of the aminoacyl-tRNA binding site. The polypeptide is Large ribosomal subunit protein bL19 (Vibrio cholerae serotype O1 (strain ATCC 39541 / Classical Ogawa 395 / O395)).